A 500-amino-acid polypeptide reads, in one-letter code: LEM protein 2 (500 aa).

Positions 1-45 (MVDVEKMSDAELRAELNVRGANVGPVTGTTRSLYEKKLKKLLSGG) constitute an LEM domain. At 1–325 (MVDVEKMSDA…VKQTNIFNEA (325 aa)) the chain is on the nuclear side. The tract at residues 39–202 (KKLLSGGAKT…RRITSVPGLI (164 aa)) is disordered. The span at 46–57 (AKTPARPTVAKP) shows a compositional bias: low complexity. The segment covering 58–75 (APKPTPKSAPAPKSPKSP) has biased composition (pro residues). Residues 77 to 89 (ARRSIPRAAATAA) show a composition bias toward low complexity. The span at 103-122 (EEMSDSDDDMRDDDDDDEEI) shows a compositional bias: acidic residues. Composition is skewed to low complexity over residues 130 to 141 (SSFRSANSTASS) and 168 to 197 (NTPR…RITS). A helical transmembrane segment spans residues 326–346 (IYFALYVILILFVVLGIAYAL). Topologically, residues 347-378 (TTTHRPKTADFSGYWGVLKAAGRDSLNFFYNY) are perinuclear space. Residues 379–399 (AILPVVSLGIFVVLGAGIYFG) traverse the membrane as a helical segment. Topologically, residues 400 to 500 (HRKYKEAKEQ…WIGNQSQKRW (101 aa)) are nuclear.

As to quaternary structure, interacts with lmn-1. Interacts (via LEM domain and the C-terminal nuclear domain) with baf-1. Ubiquitous. High expression in germline and intestine.

The protein resides in the nucleus inner membrane. It localises to the nucleus envelope. Its subcellular location is the chromosome. Functionally, nuclear lamina-associated inner nuclear membrane protein that is involved in cell division, nuclear structure organization, maintenance of nuclear envelope integrity and nuclear envelope reformation after mitosis. In interphase cells, plays a role in anchoring and spatial arrangement of chromosome arms at the nuclear periphery, forming so-called lem-2 subdomains. Both arms of autosomes but only the left arm of the X chromosome are anchored in lem-2 subdomains; sequences bound by lem-2 are mainly repetitive chromosome sequences and inactive genes. Involved in chromosome segregation and cell division, probably via its interaction with the nuclear intermediate filament protein lmn-1, the main component of nuclear lamina. Required to organize the distribution of lmn-1, nuclear pore complexes (NPCs) and chromatin in mitotically active cells. Involved in the nuclear positioning and efficient anchoring of microtubule-organizing centers (MTOCs) to the nuclear envelope during mitosis as well as on maintaining correct nuclear morphology. Contributes to closure of nuclear envelope (NE) holes and prevents excess nuclear membranes after meiosis and mitosis. Together with emr-1, plays a role in baf-1 enrichment at the nuclear envelope in anaphase. Together with emr-1, involved in muscle cell attachment to hypodermal cells, as well as muscle cell location and sarcomere organization. May play a role in radiation-induced DNA damage repair response. The polypeptide is LEM protein 2 (lem-2) (Caenorhabditis elegans).